A 119-amino-acid chain; its full sequence is U9-hexatoxin-Hi1 (119 aa).

An N-terminal signal peptide occupies residues 1-17; that stretch reads MKLYLVILVTSVALAAA. A propeptide spanning residues 18–53 is cleaved from the precursor; that stretch reads SPTRTKEEPIEDELLEALLSVEKSLFNEETTVMEKR. Disulfide bonds link C55–C73, C66–C79, C70–C117, and C72–C88.

This sequence belongs to the neurotoxin 03 (Tx2) family. 03 subfamily. As to expression, expressed by the venom gland.

It is found in the secreted. In terms of biological role, probable ion channel inhibitor. This chain is U9-hexatoxin-Hi1, found in Hadronyche infensa (Fraser island funnel-web spider).